Consider the following 401-residue polypeptide: uncharacterized protein (401 aa).

This is an uncharacterized protein from Mycobacterium tuberculosis (strain CDC 1551 / Oshkosh).